A 397-amino-acid chain; its full sequence is Phosphoglycerate kinase (397 aa).

Residues 21-23, R36, 59-62, R118, and R151 each bind substrate; these read DFN and HCGR. Residues K201, E323, and 353–356 contribute to the ATP site; that span reads GGDT.

Belongs to the phosphoglycerate kinase family. In terms of assembly, monomer.

Its subcellular location is the cytoplasm. It carries out the reaction (2R)-3-phosphoglycerate + ATP = (2R)-3-phospho-glyceroyl phosphate + ADP. It functions in the pathway carbohydrate degradation; glycolysis; pyruvate from D-glyceraldehyde 3-phosphate: step 2/5. In Bartonella henselae (strain ATCC 49882 / DSM 28221 / CCUG 30454 / Houston 1) (Rochalimaea henselae), this protein is Phosphoglycerate kinase.